The sequence spans 526 residues: Keratin, type I cytoskeletal 10 (526 aa).

Low complexity predominate over residues 1–15; it reads MSVRYSSSKQYSSSR. Residues 1-29 are disordered; that stretch reads MSVRYSSSKQYSSSRSGGGGGGGSSLRIS. The head stretch occupies residues 1-126; the sequence is MSVRYSSSKQ…FGDGGLISGN (126 aa). Phosphoserine is present on residues serine 14, serine 16, serine 34, serine 45, serine 48, and serine 151. The segment at 127 to 162 is coil 1A; that stretch reads QKITMQNLNDRLASYLDKVRALEESNYELEVKIKEW. One can recognise an IF rod domain in the interval 127-441; it reads QKITMQNLND…SLLEGEGSSG (315 aa). Positions 163-183 are linker 1; the sequence is YEKYGNSRQREPRDYSKYYQT. Residues 184–275 form a coil 1B region; that stretch reads IDDLKNQIFN…KNHEEEMRDL (92 aa). The linker 12 stretch occupies residues 276-298; sequence QNVSTGDVNVEMNAAPGVDLTEL. The interval 299 to 437 is coil 2; that stretch reads LNNMRSQYEQ…QTYRSLLEGE (139 aa). A tail region spans residues 438-526; sequence GSSGGGSYGG…GESSSKGPRY (89 aa). Over residues 458-505 the composition is skewed to gly residues; it reads GGGGYGGGSSSGGYGGGSSSGGGHGGSSGGSYGGGSSSGGGHGGGSSS. A disordered region spans residues 458–526; it reads GGGGYGGGSS…GESSSKGPRY (69 aa). The span at 506-526 shows a compositional bias: low complexity; sequence GGHKSTTTGSVGESSSKGPRY.

Belongs to the intermediate filament family. In terms of assembly, heterotetramer of two type I and two type II keratins. Heterodimer with KRT1. Two heterodimers of KRT1 and KRT10 form a heterotetramer. The KRT10 subunit in the heterotetramer is probably disulfide-linked.

The protein resides in the secreted. Its subcellular location is the extracellular space. It is found in the cell surface. It localises to the cytoplasm. Plays a role in the establishment of the epidermal barrier on plantar skin. Involved in the maintenance of cell layer development and keratin filament bundles in suprabasal cells of the epithelium. The sequence is that of Keratin, type I cytoskeletal 10 (KRT10) from Bos taurus (Bovine).